The chain runs to 374 residues: Formylglycine-generating enzyme (374 aa).

The N-terminal stretch at 1 to 33 is a signal peptide; the sequence is MAAPALGPARGCGAELTLVLLLSLFLLLGWAAG. Cys-50 and Cys-52 are joined by a disulfide. A disordered region spans residues 57-102; the sequence is RPGAQGSSAAAHRYSREANAPGSVPGGRPSPPTKMVPIPAGVFTMG. Glu-130 lines the Ca(2+) pocket. N-linked (GlcNAc...) asparagine glycosylation is present at Asn-141. 2 disulfides stabilise this stretch: Cys-218-Cys-365 and Cys-235-Cys-346. Ca(2+) contacts are provided by Asn-259, Ile-260, Asp-273, Phe-275, Asn-293, Gly-296, Ala-298, and Glu-300. Cu(2+)-binding residues include Cys-336 and Cys-341. Positions 341-360 are interaction with sulfatases; sequence CYRYRCAARSQNTPDSSASN.

Belongs to the sulfatase-modifying factor family. As to quaternary structure, monomer, homodimer and heterodimer with SUMF2. It depends on Cu(2+) as a cofactor. Post-translationally, N-glycosylated. Contains high-mannose-type oligosaccharides.

The protein resides in the endoplasmic reticulum lumen. It carries out the reaction L-cysteinyl-[sulfatase] + 2 a thiol + O2 = an organic disulfide + 3-oxo-L-alanyl-[sulfatase] + hydrogen sulfide + H2O + H(+). It functions in the pathway protein modification; sulfatase oxidation. Functionally, oxidase that catalyzes the conversion of cysteine to 3-oxoalanine on target proteins, using molecular oxygen and an unidentified reducing agent. 3-oxoalanine modification, which is also named formylglycine (fGly), occurs in the maturation of arylsulfatases and some alkaline phosphatases that use the hydrated form of 3-oxoalanine as a catalytic nucleophile. Known substrates include GALNS, ARSA, STS and ARSE. The sequence is that of Formylglycine-generating enzyme from Bos taurus (Bovine).